The sequence spans 633 residues: FAD-binding monooxygenase andJ (633 aa).

FAD contacts are provided by residues 117–120, 129–130, and Y135; these read TWYW and DT. 127-129 is an NADP(+) binding site; the sequence is MCD. NADP(+) contacts are provided by residues 269-275 and 292-293; these read TGASAVQ and RT.

The protein belongs to the FAD-binding monooxygenase family. FAD serves as cofactor.

The protein operates within secondary metabolite biosynthesis; terpenoid biosynthesis. In terms of biological role, FAD-binding monooxygenase; part of the gene cluster that mediates the biosynthesis of anditomin, a fungal meroterpenoid. The first step of the pathway is the synthesis of 3,5-dimethylorsellinic acid (DMOA) by the polyketide synthase andM. DMOA is then converted to the phthalide compound 5,7-dihydroxy-4,6-dimethylphthalide (DHDMP) by the cytochrome P450 monooxygenase andK, which is further prenylated by the prenyltransferase andD to yield farnesyl-DHDMP. Further epoxidation by the FAD-dependent monooxygenase andE leads to epoxyfarnesyl-DHDMP. The next step involves the terpene cyclase andB that converts epoxyfarnesyl-DHDMP into preandiloid A through opening of the epoxide ring followed by the cyclization of the farnesyl moiety. Preandiloid A is in turn oxidized at the C-3 hydroxyl group to yield preandiloid B by the dehydrogenase andC. The dioxygenase andA is solely responsible for the dehydrogenation of preandiloid B leading to the enone preandiloid C, as well as for the intriguing structural rearrangement to generate the bicyclo[2.2.2]octane core, transforming preandiloid C into andiconin. FAD-binding monooxygenase andJ then produces andilesin D which is reduced by dehydrogenase andI to yield andilesin A. Action of acetyltransferase andG followed by a spontaneous acetate elimination leads then to andilesin B, which is in turn substrate of the short chain dehydrogenase andH to yield andilesin C. Finally, the dioxygenase andF catalyzes the transformation of andilesin C to anditomin. The sequence is that of FAD-binding monooxygenase andJ from Emericella variicolor (Aspergillus stellatus).